We begin with the raw amino-acid sequence, 584 residues long: Arginine--tRNA ligase (584 aa).

Residues 127-137 carry the 'HIGH' region motif; the sequence is PNLAKEMHVGH.

The protein belongs to the class-I aminoacyl-tRNA synthetase family. As to quaternary structure, monomer.

It localises to the cytoplasm. It catalyses the reaction tRNA(Arg) + L-arginine + ATP = L-arginyl-tRNA(Arg) + AMP + diphosphate. The polypeptide is Arginine--tRNA ligase (Alcanivorax borkumensis (strain ATCC 700651 / DSM 11573 / NCIMB 13689 / SK2)).